The sequence spans 462 residues: Stabilizer of axonemal microtubules 1 (462 aa).

12 mn regions span residues 30–64, 65–97, 98–131, 132–165, 166–199, 200–232, 233–266, 267–299, 300–332, 333–366, 367–400, and 401–434; these read KPCF…KVNI, PMEG…PIQD, EMDF…QCND, KMEC…PASC, RFDH…LCNI, PLES…PSEV, PFDS…GLDI, PFPS…PPEG, KMDL…KKSD, RFES…FSDE, PMEY…RVNI, and PLEG…IFDE.

Belongs to the FAM154 family. Associates with microtubules via the Mn regions.

The protein localises to the cytoplasm. It localises to the cytoskeleton. Its subcellular location is the microtubule organizing center. The protein resides in the centrosome. It is found in the centriole. The protein localises to the cilium basal body. It localises to the cilium axoneme. May play a role in the regulation of cilium length. Stabilizes microtubules at low temperature. In Rattus norvegicus (Rat), this protein is Stabilizer of axonemal microtubules 1 (Saxo1).